Reading from the N-terminus, the 465-residue chain is Amino-acid carrier protein AlsT (465 aa).

A run of 10 helical transmembrane segments spans residues 20 to 40, 82 to 102, 142 to 162, 177 to 197, 208 to 228, 241 to 261, 296 to 316, 336 to 356, 382 to 402, and 405 to 425; these read LFYI…FIQF, VALA…VVAA, WLGI…FNAV, VNKI…IFGG, IVPV…ITNI, NALG…VIGA, LGVF…ILLY, IGGW…FSSV, IAVI…VWDM, and LFMG…SNVA.

This sequence belongs to the alanine or glycine:cation symporter (AGCS) (TC 2.A.25) family.

It is found in the cell membrane. The sequence is that of Amino-acid carrier protein AlsT (alsT) from Bacillus subtilis (strain 168).